The sequence spans 501 residues: MDIRFQNLGPEHWKGEIMLAPVCQDEVLTEICPQMDKAAPWLAIAPALRDFKGKTGELALMHGHPELAVPRVLAVGLGPREKVDTAGIRKAVAAAVQLCRQKGFGSILLPEPALARLPGGRERLVEECVCASLLALYRFTALKKAEKDEPAEPQWLALGFDGQEVPDASHAAARKGENAAWAVMLARDLASTPPNLLYPEKLAERARELAREKGFACTVLDEHELEKESMGCLLAVGQGSGRPPRLVILEHAPEGHEQEKPLILVGKGITFDTGGISLKPAANMHQMKADMTGAATVLATLAALAQEDAPRRVIGLLACAENMPGGRAMRPGDVVRAANGDSVEIQNTDAEGRLALCDALAYAQKTWTPAALVDIATLTGACAVALGTQIAGLFSDDADLAERIRAAGGACGEEYWPLPLWKPYAEQLKSDVADICHMGPREGGAINAALFLQHFIQEGVRWAHLDIAGVDWVSKPTPLCPAGPSAFGARTLLELARGGVL.

Lys267 and Asp272 together coordinate Mn(2+). The active site involves Lys279. Mn(2+)-binding residues include Asp290, Asp349, and Glu351. The active site involves Arg353.

The protein belongs to the peptidase M17 family. The cofactor is Mn(2+).

It localises to the cytoplasm. The catalysed reaction is Release of an N-terminal amino acid, Xaa-|-Yaa-, in which Xaa is preferably Leu, but may be other amino acids including Pro although not Arg or Lys, and Yaa may be Pro. Amino acid amides and methyl esters are also readily hydrolyzed, but rates on arylamides are exceedingly low.. It carries out the reaction Release of an N-terminal amino acid, preferentially leucine, but not glutamic or aspartic acids.. Presumably involved in the processing and regular turnover of intracellular proteins. Catalyzes the removal of unsubstituted N-terminal amino acids from various peptides. This is Probable cytosol aminopeptidase from Desulfovibrio desulfuricans (strain ATCC 27774 / DSM 6949 / MB).